The chain runs to 254 residues: 3-deoxy-manno-octulosonate cytidylyltransferase (254 aa).

Belongs to the KdsB family.

The protein resides in the cytoplasm. The enzyme catalyses 3-deoxy-alpha-D-manno-oct-2-ulosonate + CTP = CMP-3-deoxy-beta-D-manno-octulosonate + diphosphate. Its pathway is nucleotide-sugar biosynthesis; CMP-3-deoxy-D-manno-octulosonate biosynthesis; CMP-3-deoxy-D-manno-octulosonate from 3-deoxy-D-manno-octulosonate and CTP: step 1/1. The protein operates within bacterial outer membrane biogenesis; lipopolysaccharide biosynthesis. Activates KDO (a required 8-carbon sugar) for incorporation into bacterial lipopolysaccharide in Gram-negative bacteria. The sequence is that of 3-deoxy-manno-octulosonate cytidylyltransferase from Pseudomonas syringae pv. tomato (strain ATCC BAA-871 / DC3000).